Consider the following 456-residue polypeptide: Histidine--tRNA ligase (456 aa).

Belongs to the class-II aminoacyl-tRNA synthetase family. Homodimer.

Its subcellular location is the cytoplasm. It carries out the reaction tRNA(His) + L-histidine + ATP = L-histidyl-tRNA(His) + AMP + diphosphate + H(+). The chain is Histidine--tRNA ligase (hisS) from Borreliella burgdorferi (strain ATCC 35210 / DSM 4680 / CIP 102532 / B31) (Borrelia burgdorferi).